A 147-amino-acid polypeptide reads, in one-letter code: Cytochrome c-type biogenesis protein CcmE (147 aa).

Residues 1–7 (MTRKQKR) lie on the Cytoplasmic side of the membrane. Residues 8 to 28 (LSVIVGGLAFLGAATGLTFYA) form a helical; Signal-anchor for type II membrane protein membrane-spanning segment. The Periplasmic portion of the chain corresponds to 29–147 (LGQKASYFYM…KGVWQESKSE (119 aa)). 2 residues coordinate heme: His-122 and Tyr-126.

This sequence belongs to the CcmE/CycJ family.

The protein localises to the cell inner membrane. In terms of biological role, heme chaperone required for the biogenesis of c-type cytochromes. Transiently binds heme delivered by CcmC and transfers the heme to apo-cytochromes in a process facilitated by CcmF and CcmH. In Mesorhizobium japonicum (strain LMG 29417 / CECT 9101 / MAFF 303099) (Mesorhizobium loti (strain MAFF 303099)), this protein is Cytochrome c-type biogenesis protein CcmE.